Reading from the N-terminus, the 98-residue chain is Large ribosomal subunit protein uL23 (98 aa).

The protein belongs to the universal ribosomal protein uL23 family. In terms of assembly, part of the 50S ribosomal subunit. Contacts protein L29, and trigger factor when it is bound to the ribosome.

In terms of biological role, one of the early assembly proteins it binds 23S rRNA. One of the proteins that surrounds the polypeptide exit tunnel on the outside of the ribosome. Forms the main docking site for trigger factor binding to the ribosome. The sequence is that of Large ribosomal subunit protein uL23 from Parafrankia sp. (strain EAN1pec).